The sequence spans 1079 residues: Integrator complex subunit 3 homolog (1079 aa).

Disordered regions lie at residues 544–574, 925–949, and 1010–1079; these read ETEA…DDLP, YPSS…TPSA, and AVGR…NDSD. Residues 938-949 are compositionally biased toward low complexity; the sequence is KGSSAASSTPSA. Ser-1049, Ser-1050, Ser-1054, and Ser-1055 each carry phosphoserine. Basic residues predominate over residues 1062–1073; that stretch reads HKITQAAKKRKK.

The protein belongs to the Integrator subunit 3 family. Belongs to the multiprotein complex Integrator, at least composed of IntS1, IntS2, IntS3, IntS4, omd/IntS5, IntS6, defl/IntS7, IntS8, IntS9, IntS10, IntS11, IntS12, asun/IntS13, IntS14 and IntS15. The core complex associates with protein phosphatase 2A subunits mts/PP2A and Pp2A-29B, to form the Integrator-PP2A (INTAC) complex.

The protein resides in the nucleus. Its subcellular location is the cytoplasm. Its function is as follows. Component of the integrator complex, a multiprotein complex that terminates RNA polymerase II (Pol II) transcription in the promoter-proximal region of genes. The integrator complex provides a quality checkpoint during transcription elongation by driving premature transcription termination of transcripts that are unfavorably configured for transcriptional elongation: the complex terminates transcription by (1) catalyzing dephosphorylation of the C-terminal domain (CTD) of Pol II subunit Polr2A/Rbp1 and Spt5, and (2) degrading the exiting nascent RNA transcript via endonuclease activity. The integrator complex is also involved in the 3'-end processing of the U7 snRNA, and also the spliceosomal snRNAs U1, U2, U4 and U5. In Drosophila mojavensis (Fruit fly), this protein is Integrator complex subunit 3 homolog (IntS3).